A 319-amino-acid polypeptide reads, in one-letter code: Cobalamin biosynthesis protein CobD (319 aa).

4 consecutive transmembrane segments (helical) span residues 55-75 (AVMW…VLAL), 78-98 (EIHP…VLAG), 153-173 (VDGI…LAMA), and 296-316 (LMWV…CLLV).

This sequence belongs to the CobD/CbiB family.

Its subcellular location is the cell membrane. Its pathway is cofactor biosynthesis; adenosylcobalamin biosynthesis. In terms of biological role, converts cobyric acid to cobinamide by the addition of aminopropanol on the F carboxylic group. In Citrobacter koseri (strain ATCC BAA-895 / CDC 4225-83 / SGSC4696), this protein is Cobalamin biosynthesis protein CobD.